A 410-amino-acid chain; its full sequence is Ribonucleoside-diphosphate reductase small chain (410 aa).

A compositionally biased stretch (polar residues) spans 1–20 (MSVQTSPSKQVTSGIQNLNM). Disordered regions lie at residues 1–43 (MSVQ…DEDL) and 55–78 (NANK…ANEP). 2 stretches are compositionally biased toward basic and acidic residues: residues 23-43 (PAKK…DEDL) and 55-65 (NANKKAAEAKK). Asp146, Glu177, and His180 together coordinate Fe cation. Tyr184 is an active-site residue. Fe cation-binding residues include Glu240, Glu274, and His277.

The protein belongs to the ribonucleoside diphosphate reductase small chain family. Heterodimer of a large and a small subunit. It depends on Fe cation as a cofactor.

The catalysed reaction is a 2'-deoxyribonucleoside 5'-diphosphate + [thioredoxin]-disulfide + H2O = a ribonucleoside 5'-diphosphate + [thioredoxin]-dithiol. Its function is as follows. Provides the precursors necessary for DNA synthesis. Catalyzes the biosynthesis of deoxyribonucleotides from the corresponding ribonucleotides. In Neurospora crassa (strain ATCC 24698 / 74-OR23-1A / CBS 708.71 / DSM 1257 / FGSC 987), this protein is Ribonucleoside-diphosphate reductase small chain (rnr-2).